The sequence spans 338 residues: Glycerol-3-phosphate dehydrogenase [NAD(P)+] (338 aa).

Ser-14, Tyr-15, His-35, and Lys-109 together coordinate NADPH. Sn-glycerol 3-phosphate is bound by residues Lys-109, Gly-138, and Thr-140. Residue Ala-142 coordinates NADPH. Residues Lys-194, Asp-247, Ser-257, Arg-258, and Asn-259 each contribute to the sn-glycerol 3-phosphate site. Lys-194 (proton acceptor) is an active-site residue. An NADPH-binding site is contributed by Arg-258. NADPH-binding residues include Val-282 and Glu-284.

This sequence belongs to the NAD-dependent glycerol-3-phosphate dehydrogenase family.

The protein localises to the cytoplasm. The catalysed reaction is sn-glycerol 3-phosphate + NAD(+) = dihydroxyacetone phosphate + NADH + H(+). It carries out the reaction sn-glycerol 3-phosphate + NADP(+) = dihydroxyacetone phosphate + NADPH + H(+). It functions in the pathway membrane lipid metabolism; glycerophospholipid metabolism. In terms of biological role, catalyzes the reduction of the glycolytic intermediate dihydroxyacetone phosphate (DHAP) to sn-glycerol 3-phosphate (G3P), the key precursor for phospholipid synthesis. The sequence is that of Glycerol-3-phosphate dehydrogenase [NAD(P)+] from Shewanella sediminis (strain HAW-EB3).